A 159-amino-acid chain; its full sequence is 2-C-methyl-D-erythritol 2,4-cyclodiphosphate synthase (159 aa).

Positions 10 and 12 each coordinate a divalent metal cation. 4-CDP-2-C-methyl-D-erythritol 2-phosphate-binding positions include 10 to 12 (DVH) and 36 to 37 (HS). H44 serves as a coordination point for a divalent metal cation. 4-CDP-2-C-methyl-D-erythritol 2-phosphate contacts are provided by residues 58 to 60 (DIG), 134 to 137 (TTSE), F141, and R144.

The protein belongs to the IspF family. In terms of assembly, homotrimer. It depends on a divalent metal cation as a cofactor.

The enzyme catalyses 4-CDP-2-C-methyl-D-erythritol 2-phosphate = 2-C-methyl-D-erythritol 2,4-cyclic diphosphate + CMP. It participates in isoprenoid biosynthesis; isopentenyl diphosphate biosynthesis via DXP pathway; isopentenyl diphosphate from 1-deoxy-D-xylulose 5-phosphate: step 4/6. Functionally, involved in the biosynthesis of isopentenyl diphosphate (IPP) and dimethylallyl diphosphate (DMAPP), two major building blocks of isoprenoid compounds. Catalyzes the conversion of 4-diphosphocytidyl-2-C-methyl-D-erythritol 2-phosphate (CDP-ME2P) to 2-C-methyl-D-erythritol 2,4-cyclodiphosphate (ME-CPP) with a corresponding release of cytidine 5-monophosphate (CMP). The protein is 2-C-methyl-D-erythritol 2,4-cyclodiphosphate synthase of Roseobacter denitrificans (strain ATCC 33942 / OCh 114) (Erythrobacter sp. (strain OCh 114)).